We begin with the raw amino-acid sequence, 564 residues long: NAD-dependent malic enzyme (564 aa).

Catalysis depends on Tyr-104, which acts as the Proton donor. An NAD(+)-binding site is contributed by Arg-157. Lys-175 functions as the Proton acceptor in the catalytic mechanism. The a divalent metal cation site is built by Glu-246, Asp-247, and Asp-270. Residues Asp-270 and Asn-417 each contribute to the NAD(+) site.

It belongs to the malic enzymes family. Homotetramer. The cofactor is Mg(2+). Mn(2+) serves as cofactor.

It carries out the reaction (S)-malate + NAD(+) = pyruvate + CO2 + NADH. It catalyses the reaction oxaloacetate + H(+) = pyruvate + CO2. This chain is NAD-dependent malic enzyme, found in Aeromonas hydrophila subsp. hydrophila (strain ATCC 7966 / DSM 30187 / BCRC 13018 / CCUG 14551 / JCM 1027 / KCTC 2358 / NCIMB 9240 / NCTC 8049).